The following is a 346-amino-acid chain: DNA primase small subunit PriS (346 aa).

Catalysis depends on residues D95 and D97. The Zn(2+) site is built by C106, H108, C114, and C117. The Zinc knuckle motif motif lies at 106-117 (CEHEPGTVCPIC). The active site involves D280.

The protein belongs to the eukaryotic-type primase small subunit family. As to quaternary structure, heterodimer of a small subunit (PriS) and a large subunit (PriL). Mg(2+) is required as a cofactor. Requires Mn(2+) as cofactor.

In terms of biological role, catalytic subunit of DNA primase, an RNA polymerase that catalyzes the synthesis of short RNA molecules used as primers for DNA polymerase during DNA replication. The small subunit contains the primase catalytic core and has DNA synthesis activity on its own. Binding to the large subunit stabilizes and modulates the activity, increasing the rate of DNA synthesis while decreasing the length of the DNA fragments, and conferring RNA synthesis capability. The DNA polymerase activity may enable DNA primase to also catalyze primer extension after primer synthesis. May also play a role in DNA repair. This chain is DNA primase small subunit PriS, found in Pyrococcus horikoshii (strain ATCC 700860 / DSM 12428 / JCM 9974 / NBRC 100139 / OT-3).